A 233-amino-acid polypeptide reads, in one-letter code: DnaA regulatory inactivator Hda (233 aa).

Belongs to the DnaA family. HdA subfamily. The active form seems to be an ADP-bound monomer. Forms the RIDA complex (regulatory inactivation of DnaA) of ATP-DnaA, ADP-Hda and the DNA-loaded beta sliding clamp (dnaN).

Functionally, mediates the interaction of DNA replication initiator protein DnaA with DNA polymerase subunit beta sliding clamp (dnaN). Stimulates hydrolysis of ATP-DnaA to ADP-DnaA, rendering DnaA inactive for reinitiation, a process called regulatory inhibition of DnaA or RIDA. The protein is DnaA regulatory inactivator Hda of Shigella boydii serotype 4 (strain Sb227).